The following is a 189-amino-acid chain: Ras-like protein 1 (189 aa).

Gly-10–Ser-17 contributes to the GTP binding site. Residues Tyr-32 to Tyr-40 carry the Effector region motif. GTP is bound by residues Asp-57–Gln-61 and Asn-116–Asp-119. Cysteine methyl ester is present on Cys-186. The S-geranylgeranyl cysteine moiety is linked to residue Cys-186. Positions Lys-187–Leu-189 are cleaved as a propeptide — removed in mature form.

The protein belongs to the small GTPase superfamily. Ras family.

Its subcellular location is the cell membrane. It carries out the reaction GTP + H2O = GDP + phosphate + H(+). With respect to regulation, alternates between an inactive form bound to GDP and an active form bound to GTP. Activated by a guanine nucleotide-exchange factor (GEF) and inactivated by a GTPase-activating protein (GAP). In terms of biological role, ras proteins bind GDP/GTP and possess intrinsic GTPase activity. Plays a role in eye development by regulating cell growth, survival of postmitotic ommatidial cells and differentiation of photoreceptor cells. During larval development, mediates Ptth/tor signaling leading to the production of ecdysone, a hormone required for the initiation of metamorphosis. This Drosophila persimilis (Fruit fly) protein is Ras-like protein 1.